Reading from the N-terminus, the 238-residue chain is Succinate dehydrogenase iron-sulfur subunit (238 aa).

Residues 8 to 97 form the 2Fe-2S ferredoxin-type domain; it reads YRYNPDVDDA…KIVIRPLPGL (90 aa). [2Fe-2S] cluster is bound by residues cysteine 55, cysteine 60, and cysteine 75. In terms of domain architecture, 4Fe-4S ferredoxin-type spans 139-169; that stretch reads QREKLDGLYECILCACCSTSCPSFWWNPDKF. [4Fe-4S] cluster contacts are provided by cysteine 149, cysteine 152, and cysteine 155. Residue cysteine 159 participates in [3Fe-4S] cluster binding. Tryptophan 164 contacts a ubiquinone. [3Fe-4S] cluster is bound by residues cysteine 206 and cysteine 212. Residue cysteine 216 participates in [4Fe-4S] cluster binding.

This sequence belongs to the succinate dehydrogenase/fumarate reductase iron-sulfur protein family. Part of an enzyme complex containing four subunits: a flavoprotein, an iron-sulfur, cytochrome b-556, and a hydrophobic anchor protein. The complex forms trimers. [2Fe-2S] cluster serves as cofactor. Requires [3Fe-4S] cluster as cofactor. It depends on [4Fe-4S] cluster as a cofactor.

It localises to the cell inner membrane. The enzyme catalyses a quinone + succinate = fumarate + a quinol. It participates in carbohydrate metabolism; tricarboxylic acid cycle; fumarate from succinate (bacterial route): step 1/1. Functionally, two distinct, membrane-bound, FAD-containing enzymes are responsible for the catalysis of fumarate and succinate interconversion; the fumarate reductase is used in anaerobic growth, and the succinate dehydrogenase is used in aerobic growth. This is Succinate dehydrogenase iron-sulfur subunit (sdhB) from Escherichia coli (strain K12).